Here is a 291-residue protein sequence, read N- to C-terminus: uncharacterized protein (291 aa).

The segment at 77-140 (TVPQSSPTAI…PPTPVVEKSP (64 aa)) is disordered. Over residues 125-134 (PVTPAHPPTP) the composition is skewed to pro residues.

This is an uncharacterized protein from Synechocystis sp. (strain ATCC 27184 / PCC 6803 / Kazusa).